The sequence spans 319 residues: Annexin A4 (319 aa).

Alanine 2 is modified (N-acetylalanine). Residue threonine 7 is modified to Phosphothreonine. At serine 12 the chain carries Phosphoserine. 4 Annexin repeats span residues phenylalanine 14–threonine 85, proline 86–alanine 157, alanine 169–lysine 241, and asparagine 245–glycine 316. N6-acetyllysine is present on residues lysine 213, lysine 293, and lysine 300.

Belongs to the annexin family.

The protein resides in the zymogen granule membrane. Calcium/phospholipid-binding protein which promotes membrane fusion and is involved in exocytosis. In Homo sapiens (Human), this protein is Annexin A4.